The chain runs to 367 residues: Phthiodiolone/phenolphthiodiolone dimycocerosates ketoreductase (367 aa).

It belongs to the mer family. Phthiodiolone/phenolphthiodiolone dimycocerosates ketoreductase subfamily.

In terms of biological role, catalyzes the reduction of the keto moiety of phthiodiolone dimycocerosates (DIM B) and glycosylated phenolphthiodiolone dimycocerosates to form the intermediate compounds phthiotriol and glycosylated phenolphthiotriol dimycocerosates during phthiocerol dimycocerosates (DIM A) and glycosylated phenolphthiocerol dimycocerosates (PGL) biosynthesis. This chain is Phthiodiolone/phenolphthiodiolone dimycocerosates ketoreductase, found in Mycobacterium kansasii.